A 376-amino-acid chain; its full sequence is MIRTNFLLKQARRHESKDKSSKRHKSEEHNDKEHSSDKGRERLNSSENGEDRHKRKERKSSRGRSHSRSRSRERRHRSRSRERKKSRSRSRDRKKSRSRSRDRKKSRSRSRDRKRRIRTRSRSRSRHRHRTRSRSRSRSRSRDRKKRIEKPRRFSRSLSRTPSPPPFRGRNTAMDAQEALARRLERAKKLQEQREKEMVEKQKQQEMAAAAAATGGSVLNVAALLASGTQVTPQIAMAAQMAALQAKALAETGIAVPSYYNPAAVNPMKFAEQEKKRKMLWQGKKEGDKSQSAEIWEKLNFGNKDQNVKFRKLMGIKSEDEAGCSSVDEESYKTLKQQEEVFRNLDAQYEMARSQTHTQRGMGLGFTSSMRGMDTV.

Residues 1–171 form a disordered region; sequence MIRTNFLLKQ…PSPPPFRGRN (171 aa). The segment covering 13–52 has biased composition (basic and acidic residues); it reads RHESKDKSSKRHKSEEHNDKEHSSDKGRERLNSSENGEDR. Position 45 is a phosphoserine (Ser45). The segment covering 53–155 has biased composition (basic residues); the sequence is HKRKERKSSR…KRIEKPRRFS (103 aa). The stretch at 171–214 forms a coiled coil; the sequence is NTAMDAQEALARRLERAKKLQEQREKEMVEKQKQQEMAAAAAAT. A Glycyl lysine isopeptide (Lys-Gly) (interchain with G-Cter in SUMO1); alternate cross-link involves residue Lys317. A Glycyl lysine isopeptide (Lys-Gly) (interchain with G-Cter in SUMO2); alternate cross-link involves residue Lys317. Residue Ser318 is modified to Phosphoserine.

It belongs to the RSRC2 family.

The polypeptide is Arginine/serine-rich coiled-coil protein 2 (Rsrc2) (Rattus norvegicus (Rat)).